The following is a 392-amino-acid chain: Formate-dependent phosphoribosylglycinamide formyltransferase (392 aa).

N(1)-(5-phospho-beta-D-ribosyl)glycinamide is bound by residues 20–21 (EL) and E80. Residues R112, K153, 158 to 163 (SSGKGQ), 193 to 196 (EGFI), and E201 contribute to the ATP site. The region spanning 117-306 (RLAAETLALP…EFALHVRAIL (190 aa)) is the ATP-grasp domain. Mg(2+) is bound by residues E265 and E277. Residues D284, K354, and 361–362 (RR) contribute to the N(1)-(5-phospho-beta-D-ribosyl)glycinamide site.

It belongs to the PurK/PurT family. As to quaternary structure, homodimer.

The enzyme catalyses N(1)-(5-phospho-beta-D-ribosyl)glycinamide + formate + ATP = N(2)-formyl-N(1)-(5-phospho-beta-D-ribosyl)glycinamide + ADP + phosphate + H(+). It participates in purine metabolism; IMP biosynthesis via de novo pathway; N(2)-formyl-N(1)-(5-phospho-D-ribosyl)glycinamide from N(1)-(5-phospho-D-ribosyl)glycinamide (formate route): step 1/1. In terms of biological role, involved in the de novo purine biosynthesis. Catalyzes the transfer of formate to 5-phospho-ribosyl-glycinamide (GAR), producing 5-phospho-ribosyl-N-formylglycinamide (FGAR). Formate is provided by PurU via hydrolysis of 10-formyl-tetrahydrofolate. This chain is Formate-dependent phosphoribosylglycinamide formyltransferase, found in Shewanella amazonensis (strain ATCC BAA-1098 / SB2B).